Here is a 256-residue protein sequence, read N- to C-terminus: Putative ankyrin repeat protein FPV231 (256 aa).

5 ANK repeats span residues M1–S20, E24–I53, Y57–L86, H90–I119, and E123–I151.

The polypeptide is Putative ankyrin repeat protein FPV231 (Vertebrata (FPV)).